Consider the following 232-residue polypeptide: MKSKLIILLMLVPFSSFSTENNFEINKTRVIYSDSTPSVQISNNKAYPLIVQSNIWDENNNKNHDFIATPPIFKMESESRNIIKIIKTNIKLPDSQESMRWLCIESMPPTEKSTKINRKEGRTDSINISIRGCIKLIYQPASVPSPVFNNIVEKLKWHKNGKYLVLKNNTPYYISFSEVFFDSDKVNNAKDILYVKPYSEKKIDISNRIIKKIKWAMIDDAGAKTKLYESIL.

Residues 1–20 (MKSKLIILLMLVPFSSFSTE) form the signal peptide.

It belongs to the periplasmic pilus chaperone family.

It localises to the periplasm. In terms of biological role, involved in the biogenesis of the CS6 fimbria. The polypeptide is Chaperone protein CssC (cssC) (Escherichia coli).